A 95-amino-acid chain; its full sequence is MLDLVKYPVITQKTYIALFKDRQYTFDVDLRLTKPQIKKVFETLFNVDVISVNTHIPPRQKIRVGLAQGYRPRYKRAIITLKEGQSINYSLKNDN.

The protein belongs to the universal ribosomal protein uL23 family. Part of the 50S ribosomal subunit.

The protein localises to the plastid. The protein resides in the chloroplast. In terms of biological role, binds to 23S rRNA. The chain is Large ribosomal subunit protein uL23c (rpl23) from Chlamydomonas reinhardtii (Chlamydomonas smithii).